Here is a 525-residue protein sequence, read N- to C-terminus: Glutathione hydrolase-like YwrD proenzyme (525 aa).

The active-site Nucleophile is T339.

It belongs to the gamma-glutamyltransferase family. As to quaternary structure, this enzyme consists of two polypeptide chains, which are synthesized from a single polypeptide. Post-translationally, cleaved by autocatalysis into a large and a small subunit.

The enzyme catalyses an N-terminal (5-L-glutamyl)-[peptide] + an alpha-amino acid = 5-L-glutamyl amino acid + an N-terminal L-alpha-aminoacyl-[peptide]. It carries out the reaction glutathione + H2O = L-cysteinylglycine + L-glutamate. It catalyses the reaction an S-substituted glutathione + H2O = an S-substituted L-cysteinylglycine + L-glutamate. Overexpressed protein with an N-terminal His tag has been reported not to hydrolyze glutathione; it is not clear if the construct is processed to 2 subunits. The sequence is that of Glutathione hydrolase-like YwrD proenzyme (ywrD) from Bacillus subtilis (strain 168).